Reading from the N-terminus, the 126-residue chain is MGPLGFVAVGVGAAAGAWLRWGFAVLWNAINPALPYGTLAANLLGGYLVGLAVGFFDTHAGLPPEWRLLAITGFLGGLTTFSTFSSEVVANLIAGDYGWAGLHLLLHLGGSLLLTAFGLWTYRLLA.

4 consecutive transmembrane segments (helical) span residues 6-26 (FVAV…FAVL), 36-56 (YGTL…VGFF), 69-89 (LAIT…SEVV), and 99-119 (WAGL…AFGL). Na(+)-binding residues include Gly76 and Thr79.

It belongs to the fluoride channel Fluc/FEX (TC 1.A.43) family.

The protein localises to the cell inner membrane. The catalysed reaction is fluoride(in) = fluoride(out). Na(+) is not transported, but it plays an essential structural role and its presence is essential for fluoride channel function. Its function is as follows. Fluoride-specific ion channel. Important for reducing fluoride concentration in the cell, thus reducing its toxicity. This is Fluoride-specific ion channel FluC from Cupriavidus necator (strain ATCC 17699 / DSM 428 / KCTC 22496 / NCIMB 10442 / H16 / Stanier 337) (Ralstonia eutropha).